A 225-amino-acid polypeptide reads, in one-letter code: 7-carboxy-7-deazaguanine synthase (225 aa).

Substrate contacts are provided by residues 14–16 (LQG) and Arg-29. Residues 20–225 (HFGKSAFFIR…LQTHKWLGVL (206 aa)) enclose the Radical SAM core domain. 3 residues coordinate [4Fe-4S] cluster: Cys-33, Cys-37, and Cys-40. Thr-42 contributes to the Mg(2+) binding site. Thr-77 contributes to the substrate binding site. S-adenosyl-L-methionine contacts are provided by residues Gly-79 and 127–129 (SPK).

The protein belongs to the radical SAM superfamily. 7-carboxy-7-deazaguanine synthase family. Homodimer. It depends on [4Fe-4S] cluster as a cofactor. Requires S-adenosyl-L-methionine as cofactor. Mg(2+) serves as cofactor.

The enzyme catalyses 6-carboxy-5,6,7,8-tetrahydropterin + H(+) = 7-carboxy-7-deazaguanine + NH4(+). Its pathway is purine metabolism; 7-cyano-7-deazaguanine biosynthesis. Catalyzes the complex heterocyclic radical-mediated conversion of 6-carboxy-5,6,7,8-tetrahydropterin (CPH4) to 7-carboxy-7-deazaguanine (CDG), a step common to the biosynthetic pathways of all 7-deazapurine-containing compounds. This chain is 7-carboxy-7-deazaguanine synthase, found in Prochlorococcus marinus (strain SARG / CCMP1375 / SS120).